Consider the following 193-residue polypeptide: Acyl carrier protein phosphodiesterase (193 aa).

It belongs to the AcpH family.

It carries out the reaction holo-[ACP] + H2O = apo-[ACP] + (R)-4'-phosphopantetheine + H(+). Its function is as follows. Converts holo-ACP to apo-ACP by hydrolytic cleavage of the phosphopantetheine prosthetic group from ACP. The chain is Acyl carrier protein phosphodiesterase from Enterobacter sp. (strain 638).